The sequence spans 727 residues: 1,4-alpha-glucan branching enzyme GlgB (727 aa).

Aspartate 411 serves as the catalytic Nucleophile. Glutamate 464 acts as the Proton donor in catalysis.

The protein belongs to the glycosyl hydrolase 13 family. GlgB subfamily. As to quaternary structure, monomer.

It catalyses the reaction Transfers a segment of a (1-&gt;4)-alpha-D-glucan chain to a primary hydroxy group in a similar glucan chain.. It participates in glycan biosynthesis; glycogen biosynthesis. Catalyzes the formation of the alpha-1,6-glucosidic linkages in glycogen by scission of a 1,4-alpha-linked oligosaccharide from growing alpha-1,4-glucan chains and the subsequent attachment of the oligosaccharide to the alpha-1,6 position. In Protochlamydia amoebophila (strain UWE25), this protein is 1,4-alpha-glucan branching enzyme GlgB.